The primary structure comprises 247 residues: Carboxy-S-adenosyl-L-methionine synthase (247 aa).

S-adenosyl-L-methionine-binding positions include Tyr-39, 64-66 (GCS), 117-118 (DI), Asn-132, and Arg-199.

The protein belongs to the class I-like SAM-binding methyltransferase superfamily. Cx-SAM synthase family. In terms of assembly, homodimer.

It carries out the reaction prephenate + S-adenosyl-L-methionine = carboxy-S-adenosyl-L-methionine + 3-phenylpyruvate + H2O. Its function is as follows. Catalyzes the conversion of S-adenosyl-L-methionine (SAM) to carboxy-S-adenosyl-L-methionine (Cx-SAM). The sequence is that of Carboxy-S-adenosyl-L-methionine synthase from Aeromonas salmonicida (strain A449).